Here is a 189-residue protein sequence, read N- to C-terminus: Probable nicotinate-nucleotide adenylyltransferase (189 aa).

It belongs to the NadD family.

It catalyses the reaction nicotinate beta-D-ribonucleotide + ATP + H(+) = deamido-NAD(+) + diphosphate. It participates in cofactor biosynthesis; NAD(+) biosynthesis; deamido-NAD(+) from nicotinate D-ribonucleotide: step 1/1. In terms of biological role, catalyzes the reversible adenylation of nicotinate mononucleotide (NaMN) to nicotinic acid adenine dinucleotide (NaAD). The sequence is that of Probable nicotinate-nucleotide adenylyltransferase from Caulobacter sp. (strain K31).